The sequence spans 78 residues: Conotoxin 5 (78 aa).

The N-terminal stretch at 1–22 (MKLTCMMIVTVLFLTAWIFITA) is a signal peptide. Residues 23 to 49 (DNSRNGIENLPRMRRHEMKNPKASKLN) constitute a propeptide that is removed on maturation. 3 cysteine pairs are disulfide-bonded: cysteine 53/cysteine 69, cysteine 60/cysteine 73, and cysteine 68/cysteine 77.

It belongs to the conotoxin O1 superfamily. Expressed by the venom duct.

Its subcellular location is the secreted. The sequence is that of Conotoxin 5 from Conus imperialis (Imperial cone).